Here is a 343-residue protein sequence, read N- to C-terminus: Transcription factor MYB83 (343 aa).

Positions 1 to 16 (MMMRKPDITTIRDKGK) are enriched in basic and acidic residues. Residues 1–33 (MMMRKPDITTIRDKGKPNHACGGNNNKPKLRKG) form a disordered region. HTH myb-type domains follow at residues 27–79 (KPKL…INYL) and 80–134 (RPDL…KKRL). DNA-binding regions (H-T-H motif) lie at residues 55-79 (WSDI…INYL) and 107-130 (WSQI…NSTL). Positions 134–172 (LKNNSNNNTSSGSSPNNSNSNSLDPRDQHVDMGGNSTSL) are disordered. A compositionally biased stretch (low complexity) spans 136–155 (NNSNNNTSSGSSPNNSNSNS).

As to expression, expressed specifically in fiber and vessel cells that are undergoing secondary wall thickening in floral stems. Expressed in vessels but not in xylary fibers in the developing secondary xylem of roots.

It is found in the nucleus. Its function is as follows. Transcription factor that acts as a molecular switch in the NAC012/SND1-mediated transcriptional network regulating secondary wall biosynthesis. Is directly activated by NAC012/SND1 and its close homologs, including NAC043/NST1, NAC066/NST2, NAC101/VND6 and NAC030/VND7. Is required for functional expression of a number of secondary wall-associated transcription factors and secondary wall biosynthetic genes involved in cellulose, xylan and lignin synthesis. Functions redundantly with MYB46 in the transcriptional regulatory cascade leading to secondary wall formation in fibers and vessels. Transcription activator that binds to the DNA consensus sequence 5'-ACC[AT]A[AC][TC]-3', designated as the secondary wall MYB-responsive element (SMRE). Regulates directly numerous transcription factors and a number of genes involved in secondary wall biosynthesis that contain SMRE elements in their promoters. This is Transcription factor MYB83 from Arabidopsis thaliana (Mouse-ear cress).